We begin with the raw amino-acid sequence, 147 residues long: Phospholipase A2 inhibitor subunit A (147 aa).

A C-type lectin domain is found at 62-143 (EICRQAGGRI…DDNLLVVCEF (82 aa)). Disulfide bonds link Cys-64–Cys-141 and Cys-119–Cys-133. A glycan (N-linked (GlcNAc...) asparagine) is linked at Asn-103.

This sequence belongs to the alpha-type phospholipase A2 inhibitor family. In terms of assembly, homotrimer; non-covalently linked. Glycosylated. As to expression, expressed by the liver.

Its subcellular location is the secreted. Inhibits the enzymatic activity of the acidic phospholipase A2 (PLA2). The chain is Phospholipase A2 inhibitor subunit A from Gloydius brevicaudus siniticus (Chinese mamushi).